The chain runs to 363 residues: uncharacterized protein (363 aa).

An ATP-binding site is contributed by 29 to 36 (GSINSGKT).

Belongs to the archaeal ATPase family.

This is an uncharacterized protein from Methanocaldococcus jannaschii (strain ATCC 43067 / DSM 2661 / JAL-1 / JCM 10045 / NBRC 100440) (Methanococcus jannaschii).